Reading from the N-terminus, the 391-residue chain is Dual-specificity RNA methyltransferase RlmN (391 aa).

The active-site Proton acceptor is the E112. The 251-residue stretch at 118-368 (ESDRGTLCIS…VRTPRGRDIL (251 aa)) folds into the Radical SAM core domain. C125 and C371 are joined by a disulfide. C132, C136, and C139 together coordinate [4Fe-4S] cluster. S-adenosyl-L-methionine-binding positions include 197-198 (GE), S229, 251-253 (SLH), and N328. C371 serves as the catalytic S-methylcysteine intermediate.

Belongs to the radical SAM superfamily. RlmN family. It depends on [4Fe-4S] cluster as a cofactor.

It is found in the cytoplasm. The enzyme catalyses adenosine(2503) in 23S rRNA + 2 reduced [2Fe-2S]-[ferredoxin] + 2 S-adenosyl-L-methionine = 2-methyladenosine(2503) in 23S rRNA + 5'-deoxyadenosine + L-methionine + 2 oxidized [2Fe-2S]-[ferredoxin] + S-adenosyl-L-homocysteine. It carries out the reaction adenosine(37) in tRNA + 2 reduced [2Fe-2S]-[ferredoxin] + 2 S-adenosyl-L-methionine = 2-methyladenosine(37) in tRNA + 5'-deoxyadenosine + L-methionine + 2 oxidized [2Fe-2S]-[ferredoxin] + S-adenosyl-L-homocysteine. Specifically methylates position 2 of adenine 2503 in 23S rRNA and position 2 of adenine 37 in tRNAs. m2A2503 modification seems to play a crucial role in the proofreading step occurring at the peptidyl transferase center and thus would serve to optimize ribosomal fidelity. In Beijerinckia indica subsp. indica (strain ATCC 9039 / DSM 1715 / NCIMB 8712), this protein is Dual-specificity RNA methyltransferase RlmN.